A 1052-amino-acid chain; its full sequence is ATP-dependent DNA helicase MPH1 (1052 aa).

The 168-residue stretch at I89–K256 folds into the Helicase ATP-binding domain. I102–T109 serves as a coordination point for ATP. The DEAH box signature appears at D204 to H207. The 218-residue stretch at E432–R649 folds into the Helicase C-terminal domain. Disordered stretches follow at residues H495 to Q550, I798 to L832, S869 to V898, and H1002 to F1052. A compositionally biased stretch (basic and acidic residues) spans S503–S532. The segment covering R534–K549 has biased composition (polar residues). Composition is skewed to low complexity over residues Q875–V898 and S1005–S1028. The span at Q1029–T1040 shows a compositional bias: basic and acidic residues. The segment covering E1043–F1052 has biased composition (acidic residues).

The protein belongs to the DEAD box helicase family. DEAH subfamily. FANCM sub-subfamily. As to quaternary structure, interacts with the MHF histone-fold complex to form the FANCM-MHF complex.

Its subcellular location is the nucleus. It carries out the reaction ATP + H2O = ADP + phosphate + H(+). Its function is as follows. ATP-dependent DNA helicase involved in DNA damage repair by homologous recombination and in genome maintenance. Capable of unwinding D-loops. Plays a role in limiting crossover recombinants during mitotic DNA double-strand break (DSB) repair. Component of a FANCM-MHF complex which promotes gene conversion at blocked replication forks, probably by reversal of the stalled fork. The chain is ATP-dependent DNA helicase MPH1 from Candida glabrata (strain ATCC 2001 / BCRC 20586 / JCM 3761 / NBRC 0622 / NRRL Y-65 / CBS 138) (Yeast).